Reading from the N-terminus, the 308-residue chain is MQLVPLELNRSTLSGISGSISISCWIIVFVPQIYENFYRKSSDGLSLLFVVLWLAGDVFNLMGAVMQHLLSTMIILAAYYTVADIILLGQCLWYDNEEKPAVDPIHLSPANPINENVLHDVFNEQQPLLNSQGQPNRIDEEMAAPSSDGNAGDDNLREVNSRNLIKDIFIVSGVVFVGFISWYVTYCVNYTQPPPVEDPSLPVPELQINWMAQIFGYLSALLYLGSRIPQILLNFKRKSCEGISFLFFLFACLGNTTFIFSVIVISLDWKYLIMNASWLVGSIGTLFMDFVIFSQFFIYKRNKKFILN.

Residues 1 to 12 (MQLVPLELNRST) lie on the Vacuolar side of the membrane. N9 carries N-linked (GlcNAc...) asparagine glycosylation. In terms of domain architecture, PQ-loop 1 spans 10-76 (RSTLSGISGS…QHLLSTMIIL (67 aa)). Residues 13–33 (LSGISGSISISCWIIVFVPQI) form a helical membrane-spanning segment. Residues 34–44 (YENFYRKSSDG) are Cytoplasmic-facing. Residues 45-65 (LSLLFVVLWLAGDVFNLMGAV) traverse the membrane as a helical segment. The Vacuolar portion of the chain corresponds to 66-68 (MQH). The helical transmembrane segment at 69–89 (LLSTMIILAAYYTVADIILLG) threads the bilayer. Over 90 to 167 (QCLWYDNEEK…EVNSRNLIKD (78 aa)) the chain is Cytoplasmic. The helical transmembrane segment at 168–188 (IFIVSGVVFVGFISWYVTYCV) threads the bilayer. An N-linked (GlcNAc...) asparagine glycan is attached at N189. The Vacuolar portion of the chain corresponds to 189-205 (NYTQPPPVEDPSLPVPE). Residues 206-226 (LQINWMAQIFGYLSALLYLGS) traverse the membrane as a helical segment. The region spanning 211 to 274 (MAQIFGYLSA…ISLDWKYLIM (64 aa)) is the PQ-loop 2 domain. Residues 227–244 (RIPQILLNFKRKSCEGIS) lie on the Cytoplasmic side of the membrane. A helical membrane pass occupies residues 245–265 (FLFFLFACLGNTTFIFSVIVI). The Vacuolar portion of the chain corresponds to 266–277 (SLDWKYLIMNAS). N275 carries N-linked (GlcNAc...) asparagine glycosylation. The helical transmembrane segment at 278–298 (WLVGSIGTLFMDFVIFSQFFI) threads the bilayer. Residues 299–308 (YKRNKKFILN) are Cytoplasmic-facing.

Belongs to the laat-1 family.

The protein resides in the vacuole membrane. In terms of biological role, amino acid transporter that moves lysine into the vacuole. May also contribute to low affinity arginine import into the vacuole. Has also been suggested to mediate export of cationic amino acids from the vacuole. May function as an amino acid/proton antiporter. The chain is Vacuolar lysine transporter YPQ1 (YPQ1) from Saccharomyces cerevisiae (strain ATCC 204508 / S288c) (Baker's yeast).